A 377-amino-acid polypeptide reads, in one-letter code: PqqA peptide cyclase (377 aa).

One can recognise a Radical SAM core domain in the interval 12 to 228; it reads FGIPLAVLLE…EAARERLKGQ (217 aa). [4Fe-4S] cluster-binding residues include Cys26, Cys30, and Cys33.

It belongs to the radical SAM superfamily. PqqE family. Interacts with PqqD. The interaction is necessary for activity of PqqE. The cofactor is [4Fe-4S] cluster.

It carries out the reaction [PQQ precursor protein] + S-adenosyl-L-methionine = E-Y cross-linked-[PQQ precursor protein] + 5'-deoxyadenosine + L-methionine + H(+). Its pathway is cofactor biosynthesis; pyrroloquinoline quinone biosynthesis. Its function is as follows. Catalyzes the cross-linking of a glutamate residue and a tyrosine residue in the PqqA protein as part of the biosynthesis of pyrroloquinoline quinone (PQQ). The protein is PqqA peptide cyclase of Rhodopseudomonas palustris (strain ATCC BAA-98 / CGA009).